The following is a 417-amino-acid chain: Mitochondrial inner membrane i-AAA protease supercomplex subunit MGR1 (417 aa).

The segment at methionine 1–asparagine 28 is disordered. Residues methionine 1–glycine 56 are Mitochondrial intermembrane-facing. Positions aspartate 15–asparagine 28 are enriched in basic and acidic residues. A helical transmembrane segment spans residues leucine 57–tryptophan 73. The Mitochondrial matrix segment spans residues arginine 74–lysine 151. The helical transmembrane segment at leucine 152–leucine 169 threads the bilayer. Residues threonine 170 to histidine 417 lie on the Mitochondrial intermembrane side of the membrane. The segment covering serine 391 to glutamine 401 has biased composition (polar residues). The segment at serine 391 to histidine 417 is disordered.

The protein belongs to the MGR1 family. Component of the mitochondrial inner membrane i-AAA protease supercomplex composed of MGR1, MGR3 and YME1. With MGR3, forms a subcomplex that binds to YME1 and to substrates to facilitate proteolysis. Interacts directly with YME1.

The protein resides in the mitochondrion inner membrane. Component of the mitochondrial inner membrane i-AAA protease supercomplex required for mitochondrial inner membrane protein turnover. Together with MGR3, functions in an adapter complex that targets substrates to the i-AAA protease for degradation. Required for growth of cells lacking the mitochondrial genome. The protein is Mitochondrial inner membrane i-AAA protease supercomplex subunit MGR1 (MGR1) of Saccharomyces cerevisiae (strain ATCC 204508 / S288c) (Baker's yeast).